A 101-amino-acid polypeptide reads, in one-letter code: Small ribosomal subunit protein uS14 (101 aa).

Residues 51 to 70 are disordered; the sequence is LPRDSSPSRQRNRCSQTGRP. Polar residues predominate over residues 52–68; it reads PRDSSPSRQRNRCSQTG.

It belongs to the universal ribosomal protein uS14 family. In terms of assembly, part of the 30S ribosomal subunit. Contacts proteins S3 and S10.

Functionally, binds 16S rRNA, required for the assembly of 30S particles and may also be responsible for determining the conformation of the 16S rRNA at the A site. The polypeptide is Small ribosomal subunit protein uS14 (Mannheimia succiniciproducens (strain KCTC 0769BP / MBEL55E)).